The following is a 349-amino-acid chain: GTP 3',8-cyclase (349 aa).

The Radical SAM core domain maps to 24–250 (PFGRAVTYLR…DIPYRTGGPA (227 aa)). Arginine 33 is a GTP binding site. 2 residues coordinate [4Fe-4S] cluster: cysteine 40 and cysteine 44. Tyrosine 46 lines the S-adenosyl-L-methionine pocket. Position 47 (cysteine 47) interacts with [4Fe-4S] cluster. A GTP-binding site is contributed by arginine 82. Glycine 86 is a binding site for S-adenosyl-L-methionine. Position 116 (threonine 116) interacts with GTP. An S-adenosyl-L-methionine-binding site is contributed by serine 140. Lysine 176 serves as a coordination point for GTP. Methionine 210 contacts S-adenosyl-L-methionine. Positions 273 and 276 each coordinate [4Fe-4S] cluster. Residue 278-280 (RVR) coordinates GTP. Residue cysteine 290 coordinates [4Fe-4S] cluster.

It belongs to the radical SAM superfamily. MoaA family. In terms of assembly, monomer and homodimer. It depends on [4Fe-4S] cluster as a cofactor.

The catalysed reaction is GTP + AH2 + S-adenosyl-L-methionine = (8S)-3',8-cyclo-7,8-dihydroguanosine 5'-triphosphate + 5'-deoxyadenosine + L-methionine + A + H(+). The protein operates within cofactor biosynthesis; molybdopterin biosynthesis. Functionally, catalyzes the cyclization of GTP to (8S)-3',8-cyclo-7,8-dihydroguanosine 5'-triphosphate. The polypeptide is GTP 3',8-cyclase (Rhizobium meliloti (strain 1021) (Ensifer meliloti)).